We begin with the raw amino-acid sequence, 399 residues long: Argininosuccinate synthase (399 aa).

Residue 8–16 coordinates ATP; it reads AYSGGLDTS. Tyrosine 87 serves as a coordination point for L-citrulline. Glycine 117 lines the ATP pocket. Residues threonine 119, asparagine 123, and aspartate 124 each contribute to the L-aspartate site. An L-citrulline-binding site is contributed by asparagine 123. Residues arginine 127, serine 175, glutamate 260, and tyrosine 272 each coordinate L-citrulline.

The protein belongs to the argininosuccinate synthase family. Type 1 subfamily. As to quaternary structure, homotetramer.

The protein resides in the cytoplasm. The catalysed reaction is L-citrulline + L-aspartate + ATP = 2-(N(omega)-L-arginino)succinate + AMP + diphosphate + H(+). The protein operates within amino-acid biosynthesis; L-arginine biosynthesis; L-arginine from L-ornithine and carbamoyl phosphate: step 2/3. This chain is Argininosuccinate synthase, found in Rhodococcus jostii (strain RHA1).